Here is a 344-residue protein sequence, read N- to C-terminus: Arylacetonitrilase (344 aa).

The region spanning 5–290 is the CN hydrolase domain; the sequence is LRVAVTQAEP…EGIVYADLDL (286 aa). The active-site Proton acceptor is E45. Residue K126 is part of the active site. The active-site Nucleophile is the C167. A disordered region spans residues 324–344; that stretch reads VIPRDEEEPSRKANVVVPKQE.

This sequence belongs to the carbon-nitrogen hydrolase superfamily. Nitrilase family.

It catalyses the reaction a nitrile + 2 H2O = a carboxylate + NH4(+). The catalysed reaction is 4-chlorophenylacetonitrile + 2 H2O = 4-chlorophenylacetate + NH4(+). Its function is as follows. Nitrilase that hydrolyzes preferentially phenylacetonitrile and (R,S)-mandelonitrile. Also acts on dinitriles like phenylenediacetonitriles (PDAs) 1,2-PDA, 1,3-PDA, and 1,4-PDA, and cyanophenyl acetonitriles (CPAs) 2-CPA and 4-CPA. The sequence is that of Arylacetonitrilase from Macrophomina phaseolina (strain MS6) (Charcoal rot fungus).